Consider the following 1409-residue polypeptide: Tensin-2 (1409 aa).

Residues 1 to 35 (MKSSGPVERLLRALGRRDSSRAASRPRKAEPHSFR) form a disordered region. A compositionally biased stretch (basic and acidic residues) spans 9–20 (RLLRALGRRDSS). The Phorbol-ester/DAG-type zinc-finger motif lies at 31–79 (PHSFREKVFRKKPPVCAVCKVTIDGTGVSCRVCKVATHRKCEAKVTSAC). At Thr-91 the chain carries Phosphothreonine. Phosphoserine is present on residues Ser-118 and Ser-120. The 173-residue stretch at 122–294 (DPLMERRWDL…SYFSGLLSGS (173 aa)) folds into the Phosphatase tensin-type domain. The active-site Phosphocysteine intermediate is the Cys-231. The 127-residue stretch at 299 to 425 (SSPLFLHYVL…ASVEFVFSSS (127 aa)) folds into the C2 tensin-type domain. A Phosphoserine modification is found at Ser-455. Tyr-456 is subject to Phosphotyrosine. Residues 462–536 (HHEDSVDGSL…SPGRPPPTAA (75 aa)) are disordered. Ser-466 is subject to Phosphoserine. Thr-474 carries the post-translational modification Phosphothreonine. Ser-481 is subject to Phosphoserine. Tyr-483 carries the post-translational modification Phosphotyrosine. Residues 491–506 (RQTPPAPSPEPPPPPM) show a composition bias toward pro residues. Position 555 is an omega-N-methylarginine (Arg-555). Disordered stretches follow at residues 562-582 (AILD…GVYP), 812-1098 (PGEG…SSPA), and 1111-1130 (LSDN…QSNV). Phosphoserine occurs at positions 820, 825, 830, 832, 835, and 845. Polar residues-rich tracts occupy residues 900-918 (SASS…SSPV) and 930-940 (RSPTSAPTQRL). Thr-910 carries the post-translational modification Phosphothreonine. Ser-931, Ser-941, and Ser-972 each carry phosphoserine. The segment covering 968–982 (PLAPSPVSPTFPPSS) has biased composition (pro residues). The residue at position 977 (Thr-977) is a Phosphothreonine. Residues Ser-991 and Ser-1003 each carry the phosphoserine modification. Positions 1046 to 1056 (PEPPQSSPTPA) are enriched in pro residues. Residues 1140 to 1247 (WYKPHLSRDQ…SLPCCLRIPS (108 aa)) form the SH2 domain. A Phosphothreonine modification is found at Thr-1182. A Phosphoserine modification is found at Ser-1247. Residues 1275–1408 (ACSVLYLTSV…FITKVLLGQR (134 aa)) form the PTB domain.

It belongs to the PTEN phosphatase protein family. In terms of assembly, interacts with AXL. Interacts with SYK; leading to its phosphorylation. Interacts with SQSTM1 (via PB1 domain); the interaction leads to sequestration of TNS2 in cytoplasmic aggregates with SQSTM1 and promotes TNS2 ubiquitination and proteasomal degradation. Post-translationally, ubiquitinated following sequestration in cytoplasmic aggregates with SQSTM1, leading to proteasomal degradation. Detected in heart, kidney, brain, thymus, spleen, liver, placenta, lung, skeletal muscle and small intestine.

It is found in the cell junction. It localises to the focal adhesion. Its subcellular location is the cell membrane. The protein resides in the cytoplasm. It carries out the reaction O-phospho-L-tyrosyl-[protein] + H2O = L-tyrosyl-[protein] + phosphate. In terms of biological role, tyrosine-protein phosphatase which regulates cell motility, proliferation and muscle-response to insulin. Phosphatase activity is mediated by binding to phosphatidylinositol-3,4,5-triphosphate (PtdIns(3,4,5)P3) via the SH2 domain. In muscles and under catabolic conditions, dephosphorylates IRS1 leading to its degradation and muscle atrophy. Negatively regulates PI3K-AKT pathway activation. Dephosphorylates nephrin NPHS1 in podocytes which regulates activity of the mTORC1 complex. Under normal glucose conditions, NPHS1 outcompetes IRS1 for binding to phosphatidylinositol 3-kinase (PI3K) which balances mTORC1 activity but high glucose conditions lead to up-regulation of TNS2, increased NPHS1 dephosphorylation and activation of mTORC1, contributing to podocyte hypertrophy and proteinuria. Required for correct podocyte morphology, podocyte-glomerular basement membrane interaction and integrity of the glomerular filtration barrier. Enhances RHOA activation in the presence of DLC1. Plays a role in promoting DLC1-dependent remodeling of the extracellular matrix. In Homo sapiens (Human), this protein is Tensin-2 (TNS2).